The following is a 279-amino-acid chain: Ribosomal RNA small subunit methyltransferase A (279 aa).

Residues Asn-28, Leu-30, Gly-55, Glu-77, Asp-103, and Asn-122 each coordinate S-adenosyl-L-methionine.

Belongs to the class I-like SAM-binding methyltransferase superfamily. rRNA adenine N(6)-methyltransferase family. RsmA subfamily.

The protein localises to the cytoplasm. It catalyses the reaction adenosine(1518)/adenosine(1519) in 16S rRNA + 4 S-adenosyl-L-methionine = N(6)-dimethyladenosine(1518)/N(6)-dimethyladenosine(1519) in 16S rRNA + 4 S-adenosyl-L-homocysteine + 4 H(+). Its function is as follows. Specifically dimethylates two adjacent adenosines (A1518 and A1519) in the loop of a conserved hairpin near the 3'-end of 16S rRNA in the 30S particle. May play a critical role in biogenesis of 30S subunits. In Ruegeria pomeroyi (strain ATCC 700808 / DSM 15171 / DSS-3) (Silicibacter pomeroyi), this protein is Ribosomal RNA small subunit methyltransferase A.